Here is a 246-residue protein sequence, read N- to C-terminus: Ribosomal RNA small subunit methyltransferase J (246 aa).

S-adenosyl-L-methionine contacts are provided by residues Glu115–Arg116 and Asp169.

It belongs to the methyltransferase superfamily. RsmJ family.

It localises to the cytoplasm. The catalysed reaction is guanosine(1516) in 16S rRNA + S-adenosyl-L-methionine = N(2)-methylguanosine(1516) in 16S rRNA + S-adenosyl-L-homocysteine + H(+). Functionally, specifically methylates the guanosine in position 1516 of 16S rRNA. The chain is Ribosomal RNA small subunit methyltransferase J from Buchnera aphidicola subsp. Acyrthosiphon pisum (strain APS) (Acyrthosiphon pisum symbiotic bacterium).